Consider the following 152-residue polypeptide: Large ribosomal subunit protein bL9 (152 aa).

It belongs to the bacterial ribosomal protein bL9 family.

Functionally, binds to the 23S rRNA. This chain is Large ribosomal subunit protein bL9, found in Mycobacterium leprae (strain Br4923).